Here is an 830-residue protein sequence, read N- to C-terminus: Septin and tuftelin-interacting protein 1 homolog (830 aa).

The segment covering 1-17 has biased composition (acidic residues); the sequence is MEDDDGRESFEINDMDL. Disordered regions lie at residues 1–122 and 196–244; these read MEDD…PKQN and AYGK…KGSW. One can recognise a G-patch domain in the interval 153–199; that stretch reads NSNKIMKMMQAMGYKPGEGLGAQGQGIVEPVQAQLRKGRGAVGAYGK.

The protein belongs to the TFP11/STIP family. As to quaternary structure, identified in the spliceosome C complex. Can assemble into large rod-like polymers. In terms of tissue distribution, detected in muscle cells from body, pharynx and vulva, in neurons from head and tail, in pharyngeal gland and in tail hypodermal cells.

Its subcellular location is the nucleus. Its function is as follows. May be involved in pre-mRNA splicing. Required for embryonic development and survival. This is Septin and tuftelin-interacting protein 1 homolog (stip-1) from Caenorhabditis elegans.